Here is a 160-residue protein sequence, read N- to C-terminus: Nucleotide-binding protein PSHAa2277 (160 aa).

It belongs to the YajQ family.

Its function is as follows. Nucleotide-binding protein. The polypeptide is Nucleotide-binding protein PSHAa2277 (Pseudoalteromonas translucida (strain TAC 125)).